Consider the following 157-residue polypeptide: uncharacterized protein (157 aa).

One can recognise an N-acetyltransferase domain in the interval 9-154 (LLINYKTLDE…ETNSNAITNE (146 aa)).

This is an uncharacterized protein from Bacillus mycoides (strain KBAB4) (Bacillus weihenstephanensis).